Consider the following 359-residue polypeptide: uncharacterized protein (359 aa).

Low complexity predominate over residues 73–88 (AATAGTTPATGASGSA). The interval 73 to 93 (AATAGTTPATGASGSARPTDA) is disordered. Residues 179–354 (PSTCRGDNVS…AFSAAIQAGE (176 aa)) enclose the Macro domain.

This is an uncharacterized protein from Mycobacterium tuberculosis (strain ATCC 25618 / H37Rv).